Consider the following 79-residue polypeptide: Acyl carrier protein (79 aa).

Positions 6–79 (KEILDGLAEI…VQDVINYIQK (74 aa)) constitute a Carrier domain. At Ser-41 the chain carries O-(pantetheine 4'-phosphoryl)serine.

This sequence belongs to the acyl carrier protein (ACP) family. In terms of processing, 4'-phosphopantetheine is transferred from CoA to a specific serine of apo-ACP by AcpS. This modification is essential for activity because fatty acids are bound in thioester linkage to the sulfhydryl of the prosthetic group.

The protein resides in the cytoplasm. It participates in lipid metabolism; fatty acid biosynthesis. Its function is as follows. Carrier of the growing fatty acid chain in fatty acid biosynthesis. This Thermobifida fusca (strain YX) protein is Acyl carrier protein.